The sequence spans 354 residues: tRNA dimethylallyltransferase (354 aa).

28 to 35 (GPTATGKS) lines the ATP pocket. Residue 30–35 (TATGKS) participates in substrate binding. Positions 53–56 (DSRQ) are interaction with substrate tRNA.

This sequence belongs to the IPP transferase family. In terms of assembly, monomer. The cofactor is Mg(2+).

The enzyme catalyses adenosine(37) in tRNA + dimethylallyl diphosphate = N(6)-dimethylallyladenosine(37) in tRNA + diphosphate. Functionally, catalyzes the transfer of a dimethylallyl group onto the adenine at position 37 in tRNAs that read codons beginning with uridine, leading to the formation of N6-(dimethylallyl)adenosine (i(6)A). The chain is tRNA dimethylallyltransferase from Synechococcus sp. (strain JA-2-3B'a(2-13)) (Cyanobacteria bacterium Yellowstone B-Prime).